The sequence spans 711 residues: Quinolinate synthase, chloroplastic (711 aa).

The N-terminal 41 residues, 1 to 41, are a transit peptide targeting the chloroplast; the sequence is MDVSSLAAAAPSLVAPPLHHKPHLAFPPHHPSPARGSIGVR. A disordered region spans residues 17–63; sequence PLHHKPHLAFPPHHPSPARGSIGVRCAHSPSPHPLRPSAATADEEVS. Cys114 functions as the Cysteine persulfide intermediate in the catalytic mechanism. Residues His263 and Ser289 each contribute to the iminosuccinate site. Cys343 contacts [4Fe-4S] cluster. Iminosuccinate is bound by residues 372-374 and Ser394; that span reads YIN. Cys467 serves as a coordination point for [4Fe-4S] cluster. Iminosuccinate is bound by residues 493-495 and Thr518; that span reads HFE. A [4Fe-4S] cluster-binding site is contributed by Cys631.

It belongs to the quinolinate synthase family. Type 1 subfamily. In terms of assembly, homodimer. The cofactor is [4Fe-4S] cluster.

It is found in the plastid. The protein resides in the chloroplast. It catalyses the reaction iminosuccinate + dihydroxyacetone phosphate = quinolinate + phosphate + 2 H2O + H(+). It functions in the pathway cofactor biosynthesis; NAD(+) biosynthesis; quinolinate from iminoaspartate: step 1/1. Functionally, catalyzes the condensation of iminoaspartate with dihydroxyacetone phosphate to form quinolinate. The sequence is that of Quinolinate synthase, chloroplastic from Oryza sativa subsp. japonica (Rice).